We begin with the raw amino-acid sequence, 320 residues long: Protein PXR1 (320 aa).

The span at 1 to 11 (MGLAGPRKRTK) shows a compositional bias: basic residues. Residues 1–24 (MGLAGPRKRTKISHDPNNTAWSRS) are disordered. The segment covering 15 to 24 (DPNNTAWSRS) has biased composition (polar residues). The 55-residue stretch at 25-79 (TSGYGHKIMSAQGWTPGSFLGASNAAHADHFTAGSAGHIRVILKDDNLGLGAKLR) folds into the G-patch domain. The tract at residues 152–298 (GEEVQTPQIS…MGRQFTRGRH (147 aa)) is disordered. Basic residues predominate over residues 169 to 182 (KRPKKARKKEKRRA). 3 stretches are compositionally biased toward basic and acidic residues: residues 203 to 214 (RKENKEKKKSSD), 243 to 256 (KDPE…HDDS), and 269 to 288 (QESR…EHRP).

Belongs to the PINX1 family.

It localises to the nucleus. The protein localises to the nucleolus. Involved in rRNA-processing at A0, A1 and A2 sites and negatively regulates telomerase. In Ajellomyces capsulatus (strain NAm1 / WU24) (Darling's disease fungus), this protein is Protein PXR1 (PXR1).